The primary structure comprises 159 residues: Large ribosomal subunit protein eL29 (159 aa).

A compositionally biased stretch (basic residues) spans 1-26 (MAKSKNHTTHNQSRKWHRNGIKKPRS). The interval 1 to 32 (MAKSKNHTTHNQSRKWHRNGIKKPRSQRYESL) is disordered. Residue lysine 5 is modified to N6-methyllysine. Position 31 is a phosphoserine (serine 31). Position 33 is an N6-acetyllysine (lysine 33). A compositionally biased stretch (basic residues) spans 117–127 (RLCRPKAKAKA). The tract at residues 117–159 (RLCRPKAKAKAKAKDQTKAQAAAPASVPAQAPKRTQAPTKASE) is disordered. Residues 134–149 (KAQAAAPASVPAQAPK) show a composition bias toward low complexity. Serine 142 is modified (phosphoserine).

Belongs to the eukaryotic ribosomal protein eL29 family. Component of the large ribosomal subunit.

Its subcellular location is the cytoplasm. Its function is as follows. Component of the large ribosomal subunit. The ribosome is a large ribonucleoprotein complex responsible for the synthesis of proteins in the cell. The protein is Large ribosomal subunit protein eL29 (RPL29) of Homo sapiens (Human).